The following is a 1002-amino-acid chain: Golgin subfamily A member 2 (1002 aa).

Positions 1 to 11 (MWPQPRLPPRP) are enriched in pro residues. Positions 1–84 (MWPQPRLPPR…AATLQPSDDT (84 aa)) are interaction with p115/USO1. A disordered region spans residues 1 to 107 (MWPQPRLPPR…TSMAASQNHD (107 aa)). Positions 16-892 (ETRQSKLAAA…LELQELVLRL (877 aa)) form a coiled coil. Arg-18, Arg-30, and Arg-35 each carry dimethylated arginine. A Nuclear localization signal motif is present at residues 26 to 49 (KKKLREYQQRNSPGVPTGAKKKKK). Ser-37 is modified (phosphoserine). The span at 52-63 (NGSNPETTTSGG) shows a compositional bias: polar residues. Ser-66 bears the Phosphoserine mark. A compositionally biased stretch (polar residues) spans 95 to 105 (ASLTSMAASQN). Residues Ser-273, Ser-438, and Ser-690 each carry the phosphoserine modification. Residues 694-724 (HPGEGDGLDREEEEDEEEEEEEAVAVPQPMP) are disordered. Acidic residues predominate over residues 702–716 (DREEEEDEEEEEEEA). Phosphoserine occurs at positions 937, 953, and 981. Residues 992-1002 (DENDEVKITVI) form an interaction with GORASP1/GRASP65 region.

This sequence belongs to the GOLGA2 family. Homodimer, may assemble into homohexamers. Homotetramer; forms a parallel homotetramer with a flexible rod-like structure that can give rise to I- and Y-shaped conformations. Interacts with GORASP1/GRASP65. The homooligomer forms a complex with GORASP1 with a 1:1 stoichiometry. Interacts with RAB1B that has been activated by GTP-binding. Interacts with p115/USO1; interaction with p115/USO1 inhibits interaction with STX5 and/or RAB1B. Interacts with STX5. Interacts with ZFPL1. Interacts with AKAP450/AKAP9; leading to recruit AKAP450/AKAP9 to the cis-Golgi. In terms of processing, cleaved by caspases at the onset of apoptosis. Methylation by PRMT5 is required for Golgi ribbon formation. While dimethylation at Arg-30 and Arg-35 are confirmed in vivo, it is unclear whether Arg-18 is methylated in vivo. Post-translationally, phosphorylated at Ser-37 by CDK1 at the onset of mitosis, inhibiting the interaction with p115/USO1 and triggering Golgi disassembly. Phosphorylated at Ser-37 in prophase as the Golgi complex starts to break down, and remains phosphorylated during further breakdown and partitioning of the Golgi fragments in metaphase and anaphase. In telophase, GM130 is dephosphorylated by PP2A as the Golgi fragments start to reassemble.

It localises to the golgi apparatus. It is found in the cis-Golgi network membrane. The protein resides in the endoplasmic reticulum-Golgi intermediate compartment membrane. Its subcellular location is the cytoplasm. The protein localises to the cytoskeleton. It localises to the spindle pole. In terms of biological role, peripheral membrane component of the cis-Golgi stack that acts as a membrane skeleton that maintains the structure of the Golgi apparatus, and as a vesicle thether that facilitates vesicle fusion to the Golgi membrane. Required for normal protein transport from the endoplasmic reticulum to the Golgi apparatus and the cell membrane. Together with p115/USO1 and STX5, involved in vesicle tethering and fusion at the cis-Golgi membrane to maintain the stacked and inter-connected structure of the Golgi apparatus. Plays a central role in mitotic Golgi disassembly: phosphorylation at Ser-37 by CDK1 at the onset of mitosis inhibits the interaction with p115/USO1, preventing tethering of COPI vesicles and thereby inhibiting transport through the Golgi apparatus during mitosis. Also plays a key role in spindle pole assembly and centrosome organization. Promotes the mitotic spindle pole assembly by activating the spindle assembly factor TPX2 to nucleate microtubules around the Golgi and capture them to couple mitotic membranes to the spindle: upon phosphorylation at the onset of mitosis, GOLGA2 interacts with importin-alpha via the nuclear localization signal region, leading to recruit importin-alpha to the Golgi membranes and liberate the spindle assembly factor TPX2 from importin-alpha. TPX2 then activates AURKA kinase and stimulates local microtubule nucleation. Upon filament assembly, nascent microtubules are further captured by GOLGA2, thus linking Golgi membranes to the spindle. Regulates the meiotic spindle pole assembly, probably via the same mechanism. Also regulates the centrosome organization. Also required for the Golgi ribbon formation and glycosylation of membrane and secretory proteins. This is Golgin subfamily A member 2 (GOLGA2) from Homo sapiens (Human).